A 384-amino-acid chain; its full sequence is Flap endonuclease 1 (384 aa).

Positions 1–105 (MGVKGLNQLI…GELEKRLLKR (105 aa)) are N-domain. A Mg(2+)-binding site is contributed by Asp34. Positions 47 and 71 each coordinate DNA. Mg(2+)-binding residues include Asp87, Glu159, Glu161, Asp180, and Asp182. An I-domain region spans residues 123-254 (DMTKYQKRLV…VTAYKLIKEH (132 aa)). A DNA-binding site is contributed by Glu159. 2 residues coordinate DNA: Gly232 and Asp234. Asp234 serves as a coordination point for Mg(2+). The tract at residues 341–349 (IQGRLDGFF) is interaction with PCNA. The segment at 354–384 (KYSNTSPLGKDDKKRKTNDKKGAAAKKTKRR) is disordered. The segment covering 362–375 (GKDDKKRKTNDKKG) has biased composition (basic and acidic residues).

It belongs to the XPG/RAD2 endonuclease family. FEN1 subfamily. In terms of assembly, interacts with PCNA. Three molecules of FEN1 bind to one PCNA trimer with each molecule binding to one PCNA monomer. PCNA stimulates the nuclease activity without altering cleavage specificity. Mg(2+) serves as cofactor. In terms of processing, phosphorylated. Phosphorylation upon DNA damage induces relocalization to the nuclear plasma.

The protein localises to the nucleus. Its subcellular location is the nucleolus. It localises to the nucleoplasm. The protein resides in the mitochondrion. Structure-specific nuclease with 5'-flap endonuclease and 5'-3' exonuclease activities involved in DNA replication and repair. During DNA replication, cleaves the 5'-overhanging flap structure that is generated by displacement synthesis when DNA polymerase encounters the 5'-end of a downstream Okazaki fragment. It enters the flap from the 5'-end and then tracks to cleave the flap base, leaving a nick for ligation. Also involved in the long patch base excision repair (LP-BER) pathway, by cleaving within the apurinic/apyrimidinic (AP) site-terminated flap. Acts as a genome stabilization factor that prevents flaps from equilibrating into structures that lead to duplications and deletions. Also possesses 5'-3' exonuclease activity on nicked or gapped double-stranded DNA, and exhibits RNase H activity. Also involved in replication and repair of rDNA and in repairing mitochondrial DNA. In Lodderomyces elongisporus (strain ATCC 11503 / CBS 2605 / JCM 1781 / NBRC 1676 / NRRL YB-4239) (Yeast), this protein is Flap endonuclease 1.